The primary structure comprises 47 residues: Large ribosomal subunit protein bL33C (47 aa).

It belongs to the bacterial ribosomal protein bL33 family.

This chain is Large ribosomal subunit protein bL33C, found in Staphylococcus aureus (strain MRSA252).